The primary structure comprises 213 residues: Adenylate kinase (213 aa).

ATP is bound at residue 10-15 (GAGKGT). An NMP region spans residues 30 to 59 (AVGDIFRTIIKTSTSEAELINNYVKQGALI). Residues arginine 36, 57-59 (ALI), 85-88 (GYPR), and glutamine 92 each bind AMP. The segment at 123-161 (GRYSCKNCGKIYNIHFLQPKIEHVCDVCSSSVFDYRKDD) is LID. Arginine 124 contacts ATP. Zn(2+)-binding residues include cysteine 127 and cysteine 130. Position 133 to 134 (133 to 134 (IY)) interacts with ATP. Zn(2+) is bound by residues cysteine 147 and cysteine 150. Residues arginine 158 and arginine 169 each contribute to the AMP site. Residue lysine 197 participates in ATP binding.

This sequence belongs to the adenylate kinase family. Monomer.

The protein resides in the cytoplasm. The catalysed reaction is AMP + ATP = 2 ADP. Its pathway is purine metabolism; AMP biosynthesis via salvage pathway; AMP from ADP: step 1/1. Its function is as follows. Catalyzes the reversible transfer of the terminal phosphate group between ATP and AMP. Plays an important role in cellular energy homeostasis and in adenine nucleotide metabolism. In Rickettsia prowazekii (strain Madrid E), this protein is Adenylate kinase.